Consider the following 250-residue polypeptide: Probable transcriptional regulatory protein RC1_1808 (250 aa).

The interval 1-21 is disordered; that stretch reads MAGHSQFKNIMHRKGAQDAKR.

This sequence belongs to the TACO1 family.

The protein localises to the cytoplasm. This Rhodospirillum centenum (strain ATCC 51521 / SW) protein is Probable transcriptional regulatory protein RC1_1808.